A 505-amino-acid polypeptide reads, in one-letter code: Transcription factor VHR2 (505 aa).

The segment covering 1–16 (MIDDTENSKIHLEGSH) has biased composition (basic and acidic residues). 3 disordered regions span residues 1-23 (MIDD…KYTG), 105-179 (NRKR…LPYP), and 421-460 (QSNP…STSA). The segment covering 133 to 148 (PSSSNMGSCSASNASS) has biased composition (low complexity). Over residues 421–443 (QSNPMRPHSTSEVLSAHSSTKDA) the composition is skewed to polar residues.

Belongs to the VHR1 family.

It is found in the nucleus. Transcription factor that regulates ERG9, but seems to have a more global function in transcription. The sequence is that of Transcription factor VHR2 (VHR2) from Saccharomyces cerevisiae (strain ATCC 204508 / S288c) (Baker's yeast).